The sequence spans 589 residues: Arginine--tRNA ligase (589 aa).

The 'HIGH' region signature appears at 132 to 142; the sequence is PNTNKPLHVGH.

Belongs to the class-I aminoacyl-tRNA synthetase family. As to quaternary structure, monomer.

Its subcellular location is the cytoplasm. The catalysed reaction is tRNA(Arg) + L-arginine + ATP = L-arginyl-tRNA(Arg) + AMP + diphosphate. The chain is Arginine--tRNA ligase from Treponema pallidum subsp. pallidum (strain SS14).